A 474-amino-acid chain; its full sequence is ERO1-like protein alpha (474 aa).

The N-terminal stretch at 1–29 is a signal peptide; it reads MVSGCCRLDMSSYVSVLVLCSLLLWGSNS. 8 disulfide bridges follow: cysteine 40–cysteine 53, cysteine 42–cysteine 51, cysteine 90–cysteine 398, cysteine 99–cysteine 104, cysteine 99–cysteine 138, cysteine 104–cysteine 109, cysteine 215–cysteine 248, and cysteine 401–cysteine 404. Arginine 194, threonine 196, and tryptophan 207 together coordinate FAD. Positions 259, 262, 294, and 307 each coordinate FAD. Asparagine 340 and asparagine 391 each carry an N-linked (GlcNAc...) asparagine glycan. The N-linked (GlcNAc...) asparagine glycan is linked to asparagine 430.

This sequence belongs to the EROs family. As to quaternary structure, predominantly monomer. May function both as a monomer and a homodimer. FAD is required as a cofactor. The Cys-99/Cys-104 and Cys-401/Cys-404 disulfide bonds constitute the redox-active center. The Cys-99/Cys-104 disulfide bond may accept electron from protein disulfide isomerase (PDI) and funnel them to the active site disulfide Cys-401/Cys-404.

The protein localises to the endoplasmic reticulum membrane. Its activity is regulated as follows. Enzyme activity is tightly regulated to prevent the accumulation of reactive oxygen species in the endoplasmic reticulum. Reversibly down-regulated by the formation of disulfide bonds between the active site Cys-99 and Cys-138, and between Cys-104 and Cys-109. Glutathione may be required to regulate its activity in the endoplasmic reticulum. Functionally, oxidoreductase involved in disulfide bond formation in the endoplasmic reticulum. Efficiently reoxidizes P4HB/PDI, the enzyme catalyzing protein disulfide formation, in order to allow P4HB to sustain additional rounds of disulfide formation. Following P4HB reoxidation, passes its electrons to molecular oxygen via FAD, leading to the production of reactive oxygen species (ROS) in the cell. Required for the folding of immunoglobulins. This Xenopus tropicalis (Western clawed frog) protein is ERO1-like protein alpha.